Consider the following 1342-residue polypeptide: Subtilisin-like protease 2 (1342 aa).

A signal peptide spans 1–18 (MLNIIYVVSLILIKFIFY). Positions 19–687 (KECNNNNNYY…KLYNNKYSFL (669 aa)) are cleaved as a propeptide — inhibition peptide. Disordered regions lie at residues 85 to 111 (EKKTKGEENEIEKKKENDLEEKKENEI) and 143 to 171 (ADVSNNDNSGHEENNKHKLNKKNSSNYKN). Residues asparagine 165, asparagine 343, asparagine 451, asparagine 455, and asparagine 493 are each glycosylated (N-linked (GlcNAc...) asparagine). A disordered region spans residues 415-474 (KKSKKEKENTQQKGGNNPNVDINILNNNNNNNNNNNNNSNNNSNSMNDEEINYNNNNNKE). Low complexity predominate over residues 430-474 (NNPNVDINILNNNNNNNNNNNNNSNNNSNSMNDEEINYNNNNNKE). Residues 500 to 531 (IYHNKNDNSYKNKKEGTGKNNDNNDPNNNNNK) are disordered. Positions 503 to 516 (NKNDNSYKNKKEGT) are enriched in basic and acidic residues. Residues 518–531 (KNNDNNDPNNNNNK) show a composition bias toward low complexity. N-linked (GlcNAc...) asparagine glycans are attached at residues asparagine 551, asparagine 642, and asparagine 729. The Extracellular portion of the chain corresponds to 688–1137 (NKFLNIEPLI…LYNLYEYDSH (450 aa)). Residues 727-1020 (TWNLSIIRVF…DSLVNAEGAV (294 aa)) enclose the Peptidase S8 domain. Catalysis depends on charge relay system residues aspartate 755 and histidine 798. Asparagine 821, asparagine 857, asparagine 893, and asparagine 951 each carry an N-linked (GlcNAc...) asparagine glycan. Catalysis depends on serine 961, which acts as the Charge relay system. N-linked (GlcNAc...) asparagine glycosylation is found at asparagine 1010 and asparagine 1106. A helical transmembrane segment spans residues 1138–1158 (YLLASVILFFLALLSIFVGMI). Over 1159–1342 (YMKSRKHSDK…MNQLDDMFMK (184 aa)) the chain is Cytoplasmic.

Belongs to the peptidase S8 family. Proteolytically cleaved at the N-terminus to generate a 74kDa intermediate which is further processed into a 72kDa form. The first maturation cleavage is autocatalytic, occurs in the ER and is necessary for the subsequent SUB2 trafficking to the microneme. The second cleavage may be mediated by PMX/plasmepsin X.

It localises to the cell membrane. The protein localises to the cytoplasmic vesicle. It is found in the secretory vesicle. The protein resides in the microneme membrane. It catalyses the reaction Hydrolysis of proteins with broad specificity for peptide bonds, and a preference for a large uncharged residue in P1. Hydrolyzes peptide amides.. Its activity is regulated as follows. Activation may be calcium-dependent. Inhibited by the non-covalent interaction with the cleaved propeptide. Serine protease which plays an essential role in the shedding of AMA1, MSP1 and MSP7 from the surface of the invading merozoite; this step is essential for productive invasion and the release of the adhesion between the erythrocyte and the merozoite. May cleave TRAMP/PTTRAMP, thereby shedding TRAMP from the merozoite surface during erythrocyte invasion. The protein is Subtilisin-like protease 2 of Plasmodium falciparum.